The following is a 133-amino-acid chain: p53 and DNA damage-regulated protein 1 (133 aa).

It belongs to the prefoldin subunit beta family. Component of the PAQosome complex which is responsible for the biogenesis of several protein complexes and which consists of R2TP complex members RUVBL1, RUVBL2, RPAP3 and PIH1D1, URI complex members PFDN2, PFDN6, PDRG1, UXT and URI1 as well as ASDURF, POLR2E and DNAAF10/WDR92.

Its subcellular location is the cytoplasm. Its function is as follows. May play a role in chaperone-mediated protein folding. The protein is p53 and DNA damage-regulated protein 1 (Pdrg1) of Rattus norvegicus (Rat).